A 250-amino-acid chain; its full sequence is Probable transcriptional regulatory protein RHA1_ro06891 (250 aa).

Belongs to the TACO1 family.

Its subcellular location is the cytoplasm. This chain is Probable transcriptional regulatory protein RHA1_ro06891, found in Rhodococcus jostii (strain RHA1).